The sequence spans 349 residues: Biotin synthase (349 aa).

Basic and acidic residues predominate over residues 1-11 (MLEGIEREAAE). The tract at residues 1-30 (MLEGIEREAAEHSNGCSGPAGHAPPAGAPR) is disordered. A Radical SAM core domain is found at 64–283 (HEVQLCTLLS…IAVARVMMPR (220 aa)). [4Fe-4S] cluster is bound by residues cysteine 79, cysteine 83, and cysteine 86. [2Fe-2S] cluster is bound by residues cysteine 123, cysteine 155, cysteine 215, and arginine 287.

This sequence belongs to the radical SAM superfamily. Biotin synthase family. As to quaternary structure, homodimer. [4Fe-4S] cluster serves as cofactor. Requires [2Fe-2S] cluster as cofactor.

The enzyme catalyses (4R,5S)-dethiobiotin + (sulfur carrier)-SH + 2 reduced [2Fe-2S]-[ferredoxin] + 2 S-adenosyl-L-methionine = (sulfur carrier)-H + biotin + 2 5'-deoxyadenosine + 2 L-methionine + 2 oxidized [2Fe-2S]-[ferredoxin]. It functions in the pathway cofactor biosynthesis; biotin biosynthesis; biotin from 7,8-diaminononanoate: step 2/2. In terms of biological role, catalyzes the conversion of dethiobiotin (DTB) to biotin by the insertion of a sulfur atom into dethiobiotin via a radical-based mechanism. In Sorangium cellulosum (strain So ce56) (Polyangium cellulosum (strain So ce56)), this protein is Biotin synthase.